Consider the following 461-residue polypeptide: Ubiquinone hydroxylase UbiM (461 aa).

Belongs to the UbiH/COQ6 family. The cofactor is FAD.

The enzyme catalyses a 2-(all-trans-polyprenyl)phenol + NADPH + O2 + H(+) = a 3-(all-trans-polyprenyl)benzene-1,2-diol + NADP(+) + H2O. It catalyses the reaction a 5-methoxy-2-methyl-3-(all-trans-polyprenyl)benzene-1,4-diol + AH2 + O2 = a 3-demethylubiquinol + A + H2O. It participates in cofactor biosynthesis; ubiquinone biosynthesis. Its function is as follows. Catalyzes the hydroxylation of three positions of the aromatic ring during ubiquinone biosynthesis. In Neisseria meningitidis serogroup C / serotype 2a (strain ATCC 700532 / DSM 15464 / FAM18), this protein is Ubiquinone hydroxylase UbiM.